A 302-amino-acid polypeptide reads, in one-letter code: MPVSTSGFDAPARLGTLLTAMATPFKPDGSLDIETAARLATRLVDAGCDGLVVSGTTGESPTTTDDEKILLLRTVLEAVGDRARIVAGAGTYDTAHSIHLAKASAAEGAHGLLVVTPYYSRPPQAGLVAHFTAVADATDLPNILYDIPPRSVVPIEWDTIRRLAQHPNIVAIKDAKADLHGGGQIIAETGLAYYSGDDALNLPWLAMGAVGFISVWGHLAASQLRDMLSAFASGDVATARKINVALGPLSAAQSRLGGVTLSKAGLRLQGFEVGDPRLPQIPANDVQLQALAADMRAASVLR.

Thr57 serves as a coordination point for pyruvate. The active-site Proton donor/acceptor is Tyr145. The Schiff-base intermediate with substrate role is filled by Lys173. Ile213 is a binding site for pyruvate.

It belongs to the DapA family. As to quaternary structure, homotetramer; dimer of dimers.

It is found in the cytoplasm. It catalyses the reaction L-aspartate 4-semialdehyde + pyruvate = (2S,4S)-4-hydroxy-2,3,4,5-tetrahydrodipicolinate + H2O + H(+). It functions in the pathway amino-acid biosynthesis; L-lysine biosynthesis via DAP pathway; (S)-tetrahydrodipicolinate from L-aspartate: step 3/4. In terms of biological role, catalyzes the condensation of (S)-aspartate-beta-semialdehyde [(S)-ASA] and pyruvate to 4-hydroxy-tetrahydrodipicolinate (HTPA). The sequence is that of 4-hydroxy-tetrahydrodipicolinate synthase from Mycolicibacterium gilvum (strain PYR-GCK) (Mycobacterium gilvum (strain PYR-GCK)).